Consider the following 367-residue polypeptide: tRNA pseudouridine synthase D (367 aa).

D80 (nucleophile) is an active-site residue. The 161-residue stretch at 156–316 folds into the TRUD domain; it reads GIPNWFGEQR…LKQERRALRL (161 aa).

Belongs to the pseudouridine synthase TruD family.

The catalysed reaction is uridine(13) in tRNA = pseudouridine(13) in tRNA. Functionally, responsible for synthesis of pseudouridine from uracil-13 in transfer RNAs. This Xanthomonas campestris pv. campestris (strain 8004) protein is tRNA pseudouridine synthase D.